Here is a 307-residue protein sequence, read N- to C-terminus: Ethylmalonyl-CoA decarboxylase (307 aa).

Ala2 bears the N-acetylalanine mark. Lys217 is subject to N6-acetyllysine; alternate. Lys217 is modified (N6-succinyllysine; alternate). Lys301 is subject to N6-succinyllysine.

It belongs to the enoyl-CoA hydratase/isomerase family.

It is found in the cytoplasm. The protein localises to the cytosol. The catalysed reaction is (2S)-ethylmalonyl-CoA + H(+) = butanoyl-CoA + CO2. It carries out the reaction (S)-methylmalonyl-CoA + H(+) = propanoyl-CoA + CO2. It catalyses the reaction (2R)-ethylmalonyl-CoA + H(+) = butanoyl-CoA + CO2. Functionally, decarboxylates ethylmalonyl-CoA, a potentially toxic metabolite, to form butyryl-CoA, suggesting it might be involved in metabolite proofreading. Acts preferentially on (S)-ethylmalonyl-CoA but also has some activity on the (R)-isomer. Also has methylmalonyl-CoA decarboxylase activity at lower level. In Homo sapiens (Human), this protein is Ethylmalonyl-CoA decarboxylase (ECHDC1).